Consider the following 241-residue polypeptide: Proteasome subunit alpha (241 aa).

This sequence belongs to the peptidase T1A family. In terms of assembly, the 20S proteasome core is composed of 14 alpha and 14 beta subunits that assemble into four stacked heptameric rings, resulting in a barrel-shaped structure. The two inner rings, each composed of seven catalytic beta subunits, are sandwiched by two outer rings, each composed of seven alpha subunits. The catalytic chamber with the active sites is on the inside of the barrel. Has a gated structure, the ends of the cylinder being occluded by the N-termini of the alpha-subunits. Is capped at one or both ends by the proteasome regulatory ATPase, PAN.

It is found in the cytoplasm. Its activity is regulated as follows. The formation of the proteasomal ATPase PAN-20S proteasome complex, via the docking of the C-termini of PAN into the intersubunit pockets in the alpha-rings, triggers opening of the gate for substrate entry. Interconversion between the open-gate and close-gate conformations leads to a dynamic regulation of the 20S proteasome proteolysis activity. In terms of biological role, component of the proteasome core, a large protease complex with broad specificity involved in protein degradation. This chain is Proteasome subunit alpha, found in Methanosphaerula palustris (strain ATCC BAA-1556 / DSM 19958 / E1-9c).